The following is a 415-amino-acid chain: Histidine--tRNA ligase (415 aa).

Belongs to the class-II aminoacyl-tRNA synthetase family. Homodimer.

The protein localises to the cytoplasm. The enzyme catalyses tRNA(His) + L-histidine + ATP = L-histidyl-tRNA(His) + AMP + diphosphate + H(+). The protein is Histidine--tRNA ligase of Clostridium botulinum (strain Okra / Type B1).